Reading from the N-terminus, the 377-residue chain is Lipoyl synthase, mitochondrial (377 aa).

Residues cysteine 103, cysteine 108, cysteine 114, cysteine 134, cysteine 138, cysteine 141, and serine 349 each contribute to the [4Fe-4S] cluster site. The region spanning glutamate 119–leucine 338 is the Radical SAM core domain.

This sequence belongs to the radical SAM superfamily. Lipoyl synthase family. [4Fe-4S] cluster is required as a cofactor.

The protein resides in the mitochondrion. The catalysed reaction is [[Fe-S] cluster scaffold protein carrying a second [4Fe-4S](2+) cluster] + N(6)-octanoyl-L-lysyl-[protein] + 2 oxidized [2Fe-2S]-[ferredoxin] + 2 S-adenosyl-L-methionine + 4 H(+) = [[Fe-S] cluster scaffold protein] + N(6)-[(R)-dihydrolipoyl]-L-lysyl-[protein] + 4 Fe(3+) + 2 hydrogen sulfide + 2 5'-deoxyadenosine + 2 L-methionine + 2 reduced [2Fe-2S]-[ferredoxin]. It functions in the pathway protein modification; protein lipoylation via endogenous pathway; protein N(6)-(lipoyl)lysine from octanoyl-[acyl-carrier-protein]: step 2/2. In terms of biological role, catalyzes the radical-mediated insertion of two sulfur atoms into the C-6 and C-8 positions of the octanoyl moiety bound to the lipoyl domains of lipoate-dependent enzymes, thereby converting the octanoylated domains into lipoylated derivatives. In Drosophila melanogaster (Fruit fly), this protein is Lipoyl synthase, mitochondrial.